Here is a 293-residue protein sequence, read N- to C-terminus: Cyclohexadienyl dehydrogenase (293 aa).

The Prephenate/arogenate dehydrogenase domain maps to 5 to 293 (KHIAIIGLGL…ALKTDHDIRP (289 aa)). Position 6 to 30 (6 to 30 (HIAIIGLGLIGSSAARATKAYCPDV)) interacts with NAD(+).

The protein belongs to the prephenate/arogenate dehydrogenase family. Homodimer.

It carries out the reaction L-arogenate + NAD(+) = L-tyrosine + CO2 + NADH. The enzyme catalyses prephenate + NAD(+) = 3-(4-hydroxyphenyl)pyruvate + CO2 + NADH. It participates in amino-acid biosynthesis; L-tyrosine biosynthesis; (4-hydroxyphenyl)pyruvate from prephenate (NAD(+) route): step 1/1. It functions in the pathway amino-acid biosynthesis; L-tyrosine biosynthesis; L-tyrosine from L-arogenate (NAD(+) route): step 1/1. Insensitive to feedback inhibition by L-tyrosine. Its function is as follows. Can function as either prephenate dehydrogenase or as arogenate dehydrogenase in the biosynthesis of L-tyrosine. Catalyzes two analogous reactions: converts prephenate to 4-hydroxyphenylpyruvate and transforms L-arogenate to L-tyrosine. Is not able to utilize NADP(+) instead of NAD(+) as cosubstrate. In Zymomonas mobilis subsp. mobilis (strain ATCC 31821 / ZM4 / CP4), this protein is Cyclohexadienyl dehydrogenase.